The sequence spans 207 residues: dTTP/UTP pyrophosphatase (207 aa).

The active-site Proton acceptor is Asp-87.

Belongs to the Maf family. YhdE subfamily. The cofactor is a divalent metal cation.

The protein localises to the cytoplasm. The enzyme catalyses dTTP + H2O = dTMP + diphosphate + H(+). It catalyses the reaction UTP + H2O = UMP + diphosphate + H(+). In terms of biological role, nucleoside triphosphate pyrophosphatase that hydrolyzes dTTP and UTP. May have a dual role in cell division arrest and in preventing the incorporation of modified nucleotides into cellular nucleic acids. The protein is dTTP/UTP pyrophosphatase of Nitrosomonas europaea (strain ATCC 19718 / CIP 103999 / KCTC 2705 / NBRC 14298).